The primary structure comprises 39 residues: MTIEKIYPIFTVRWLAVHGLAVPTVFFLGSISAMQFIQR.

A helical transmembrane segment spans residues 14–30; the sequence is WLAVHGLAVPTVFFLGS. Residue His-18 participates in heme binding.

It belongs to the PsbE/PsbF family. As to quaternary structure, heterodimer of an alpha subunit and a beta subunit. PSII is composed of 1 copy each of membrane proteins PsbA, PsbB, PsbC, PsbD, PsbE, PsbF, PsbH, PsbI, PsbJ, PsbK, PsbL, PsbM, PsbT, PsbX, PsbY, PsbZ, Psb30/Ycf12, at least 3 peripheral proteins of the oxygen-evolving complex and a large number of cofactors. It forms dimeric complexes. The cofactor is heme b.

It is found in the plastid. It localises to the chloroplast thylakoid membrane. Its function is as follows. This b-type cytochrome is tightly associated with the reaction center of photosystem II (PSII). PSII is a light-driven water:plastoquinone oxidoreductase that uses light energy to abstract electrons from H(2)O, generating O(2) and a proton gradient subsequently used for ATP formation. It consists of a core antenna complex that captures photons, and an electron transfer chain that converts photonic excitation into a charge separation. The polypeptide is Cytochrome b559 subunit beta (Welwitschia mirabilis (Tree tumbo)).